The chain runs to 304 residues: MERVGMNGAEIIDGKAYAAGLRARVATAVPAFRVAAGRAPGLAVVLVGEDAASQVYVRSKHKATVEAGMESFEHRLPATASETELLALVERLNADDRVDGILVQLPLPPHIDEKKVIATIDPDKDVDGFHVVNAGRLAVGEAGYVPCTPLGCLMLLKDRRGDLSGLEAVVIGRSNIVGKPMAALLLAENCTVTIAHSRTRDLAEVVRRADIVVAAVGRPEMVRGDWIRPGATVIDVGINRVPGAEPGKTRLVGDVAFAEAAAVAGAITPVPGGVGPMTIAVLLRNTLVAAHRRAGVALPEGAIG.

Residues 172-174 (GRS), Ser197, and Ile238 each bind NADP(+).

This sequence belongs to the tetrahydrofolate dehydrogenase/cyclohydrolase family. Homodimer.

It carries out the reaction (6R)-5,10-methylene-5,6,7,8-tetrahydrofolate + NADP(+) = (6R)-5,10-methenyltetrahydrofolate + NADPH. It catalyses the reaction (6R)-5,10-methenyltetrahydrofolate + H2O = (6R)-10-formyltetrahydrofolate + H(+). Its pathway is one-carbon metabolism; tetrahydrofolate interconversion. Functionally, catalyzes the oxidation of 5,10-methylenetetrahydrofolate to 5,10-methenyltetrahydrofolate and then the hydrolysis of 5,10-methenyltetrahydrofolate to 10-formyltetrahydrofolate. This Rhizorhabdus wittichii (strain DSM 6014 / CCUG 31198 / JCM 15750 / NBRC 105917 / EY 4224 / RW1) (Sphingomonas wittichii) protein is Bifunctional protein FolD 3.